The chain runs to 71 residues: Small ribosomal subunit protein bS21 (71 aa).

Belongs to the bacterial ribosomal protein bS21 family.

This Hahella chejuensis (strain KCTC 2396) protein is Small ribosomal subunit protein bS21.